The sequence spans 418 residues: Tyrosine--tRNA ligase 1 (418 aa).

An L-tyrosine-binding site is contributed by Y34. A 'HIGH' region motif is present at residues P39–H48. 2 residues coordinate L-tyrosine: Y169 and Q173. Residues K230–T234 carry the 'KMSKS' region motif. Residue K233 participates in ATP binding. An S4 RNA-binding domain is found at T352–Y418.

Belongs to the class-I aminoacyl-tRNA synthetase family. TyrS type 1 subfamily. As to quaternary structure, homodimer.

It is found in the cytoplasm. The enzyme catalyses tRNA(Tyr) + L-tyrosine + ATP = L-tyrosyl-tRNA(Tyr) + AMP + diphosphate + H(+). Functionally, catalyzes the attachment of tyrosine to tRNA(Tyr) in a two-step reaction: tyrosine is first activated by ATP to form Tyr-AMP and then transferred to the acceptor end of tRNA(Tyr). The chain is Tyrosine--tRNA ligase 1 from Bacillus anthracis.